The sequence spans 404 residues: Argininosuccinate synthase (404 aa).

ATP is bound by residues 10 to 18 (AYSGGLDTS) and alanine 37. Residues tyrosine 89 and serine 94 each contribute to the L-citrulline site. Position 119 (glycine 119) interacts with ATP. Positions 121, 125, and 126 each coordinate L-aspartate. Asparagine 125 provides a ligand contact to L-citrulline. Arginine 129, serine 178, serine 187, glutamate 263, and tyrosine 275 together coordinate L-citrulline.

It belongs to the argininosuccinate synthase family. Type 1 subfamily. As to quaternary structure, homotetramer.

Its subcellular location is the cytoplasm. It catalyses the reaction L-citrulline + L-aspartate + ATP = 2-(N(omega)-L-arginino)succinate + AMP + diphosphate + H(+). Its pathway is amino-acid biosynthesis; L-arginine biosynthesis; L-arginine from L-ornithine and carbamoyl phosphate: step 2/3. This is Argininosuccinate synthase from Photobacterium profundum (strain SS9).